Here is a 330-residue protein sequence, read N- to C-terminus: Putative acetyltransferase ORF330 (330 aa).

Transmembrane regions (helical) follow at residues 29-49, 50-70, 90-110, 118-138, 163-183, 190-210, 225-245, 252-272, 273-293, and 297-317; these read GFAS…LPLS, IFRP…FLLL, IYPL…YYFH, LFLH…SYVF, FLLA…IVTL, LLYF…IAYI, ISFL…NEFL, VVVY…PPKV, LSKV…WHLL, and LLGV…EFPL.

It localises to the host membrane. The polypeptide is Putative acetyltransferase ORF330 (Acidianus convivator (ATV)).